A 366-amino-acid chain; its full sequence is Isopentenyl-diphosphate delta-isomerase (366 aa).

6 to 7 (RK) contributes to the substrate binding site. Residues threonine 63, 64 to 66 (GMT), serine 94, and asparagine 123 contribute to the FMN site. 94–96 (SQR) lines the substrate pocket. Glutamine 158 serves as a coordination point for substrate. Glutamate 159 lines the Mg(2+) pocket. FMN is bound by residues lysine 191, serine 216, threonine 221, 273 to 275 (GIR), and 294 to 295 (AN).

It belongs to the IPP isomerase type 2 family. Homooctamer. Dimer of tetramers. FMN serves as cofactor. Requires NADPH as cofactor. It depends on Mg(2+) as a cofactor.

Its subcellular location is the cytoplasm. The enzyme catalyses isopentenyl diphosphate = dimethylallyl diphosphate. In terms of biological role, involved in the biosynthesis of isoprenoids. Catalyzes the 1,3-allylic rearrangement of the homoallylic substrate isopentenyl (IPP) to its allylic isomer, dimethylallyl diphosphate (DMAPP). This chain is Isopentenyl-diphosphate delta-isomerase, found in Metallosphaera sedula (strain ATCC 51363 / DSM 5348 / JCM 9185 / NBRC 15509 / TH2).